The primary structure comprises 264 residues: uncharacterized protein (264 aa).

The segment at Arg57 to Thr264 is disordered. The segment covering Gly140–His153 has biased composition (basic residues). Low complexity predominate over residues Ser154–Pro165.

This is an uncharacterized protein from Homo sapiens (Human).